The sequence spans 199 residues: Cytochrome c oxidase subunit 2 (199 aa).

A helical transmembrane segment spans residues 1-13 (AICSLVLYLLTLM). Residues 14–26 (LMEKLSSNTVDAQ) lie on the Mitochondrial matrix side of the membrane. The helical transmembrane segment at 27–54 (EVELIWTILPAIVLILLALPSLQILYMM) threads the bilayer. Over 55-199 (DEIDEPDLTL…SSLLSASSSL (145 aa)) the chain is Mitochondrial intermembrane. Residues His-128, Cys-163, Glu-165, Cys-167, His-171, and Met-174 each contribute to the Cu cation site. Glu-165 contributes to the Mg(2+) binding site.

Belongs to the cytochrome c oxidase subunit 2 family. As to quaternary structure, component of the cytochrome c oxidase (complex IV, CIV), a multisubunit enzyme composed of 14 subunits. The complex is composed of a catalytic core of 3 subunits MT-CO1, MT-CO2 and MT-CO3, encoded in the mitochondrial DNA, and 11 supernumerary subunits COX4I, COX5A, COX5B, COX6A, COX6B, COX6C, COX7A, COX7B, COX7C, COX8 and NDUFA4, which are encoded in the nuclear genome. The complex exists as a monomer or a dimer and forms supercomplexes (SCs) in the inner mitochondrial membrane with NADH-ubiquinone oxidoreductase (complex I, CI) and ubiquinol-cytochrome c oxidoreductase (cytochrome b-c1 complex, complex III, CIII), resulting in different assemblies (supercomplex SCI(1)III(2)IV(1) and megacomplex MCI(2)III(2)IV(2)). Found in a complex with TMEM177, COA6, COX18, COX20, SCO1 and SCO2. Interacts with TMEM177 in a COX20-dependent manner. Interacts with COX20. Interacts with COX16. Cu cation is required as a cofactor.

The protein resides in the mitochondrion inner membrane. The enzyme catalyses 4 Fe(II)-[cytochrome c] + O2 + 8 H(+)(in) = 4 Fe(III)-[cytochrome c] + 2 H2O + 4 H(+)(out). In terms of biological role, component of the cytochrome c oxidase, the last enzyme in the mitochondrial electron transport chain which drives oxidative phosphorylation. The respiratory chain contains 3 multisubunit complexes succinate dehydrogenase (complex II, CII), ubiquinol-cytochrome c oxidoreductase (cytochrome b-c1 complex, complex III, CIII) and cytochrome c oxidase (complex IV, CIV), that cooperate to transfer electrons derived from NADH and succinate to molecular oxygen, creating an electrochemical gradient over the inner membrane that drives transmembrane transport and the ATP synthase. Cytochrome c oxidase is the component of the respiratory chain that catalyzes the reduction of oxygen to water. Electrons originating from reduced cytochrome c in the intermembrane space (IMS) are transferred via the dinuclear copper A center (CU(A)) of subunit 2 and heme A of subunit 1 to the active site in subunit 1, a binuclear center (BNC) formed by heme A3 and copper B (CU(B)). The BNC reduces molecular oxygen to 2 water molecules using 4 electrons from cytochrome c in the IMS and 4 protons from the mitochondrial matrix. The sequence is that of Cytochrome c oxidase subunit 2 (MT-CO2) from Dromaius novaehollandiae (Emu).